We begin with the raw amino-acid sequence, 246 residues long: Bis(5'-nucleosyl)-tetraphosphatase PrpE [asymmetrical] (246 aa).

It belongs to the PrpE family. Requires Ni(2+) as cofactor.

The enzyme catalyses P(1),P(4)-bis(5'-guanosyl) tetraphosphate + H2O = GMP + GTP + 2 H(+). Functionally, asymmetrically hydrolyzes Ap4p to yield AMP and ATP. This is Bis(5'-nucleosyl)-tetraphosphatase PrpE [asymmetrical] from Bacillus cereus (strain AH820).